Here is a 364-residue protein sequence, read N- to C-terminus: tRNA 2-selenouridine synthase (364 aa).

The Rhodanese domain maps to 14–137 (LIADTPIIDV…LRQTTIQATI (124 aa)). Cys97 acts as the S-selanylcysteine intermediate in catalysis.

The protein belongs to the SelU family. In terms of assembly, monomer.

It catalyses the reaction 5-methylaminomethyl-2-thiouridine(34) in tRNA + selenophosphate + (2E)-geranyl diphosphate + H2O + H(+) = 5-methylaminomethyl-2-selenouridine(34) in tRNA + (2E)-thiogeraniol + phosphate + diphosphate. It carries out the reaction 5-methylaminomethyl-2-thiouridine(34) in tRNA + (2E)-geranyl diphosphate = 5-methylaminomethyl-S-(2E)-geranyl-thiouridine(34) in tRNA + diphosphate. The catalysed reaction is 5-methylaminomethyl-S-(2E)-geranyl-thiouridine(34) in tRNA + selenophosphate + H(+) = 5-methylaminomethyl-2-(Se-phospho)selenouridine(34) in tRNA + (2E)-thiogeraniol. The enzyme catalyses 5-methylaminomethyl-2-(Se-phospho)selenouridine(34) in tRNA + H2O = 5-methylaminomethyl-2-selenouridine(34) in tRNA + phosphate. Its function is as follows. Involved in the post-transcriptional modification of the uridine at the wobble position (U34) of tRNA(Lys), tRNA(Glu) and tRNA(Gln). Catalyzes the conversion of 2-thiouridine (S2U-RNA) to 2-selenouridine (Se2U-RNA). Acts in a two-step process involving geranylation of 2-thiouridine (S2U) to S-geranyl-2-thiouridine (geS2U) and subsequent selenation of the latter derivative to 2-selenouridine (Se2U) in the tRNA chain. This Escherichia coli (strain 55989 / EAEC) protein is tRNA 2-selenouridine synthase.